The following is a 735-amino-acid chain: Probable E3 ubiquitin-protein ligase MID2 (735 aa).

The RING-type zinc finger occupies 30–80 (CPICLELFEDPLLLPCAHSLCFSCAHRILVSSCSSGESIEPITAFQCPTCR). A B box-type 1; degenerate zinc finger spans residues 137-184 (IACQFCEQDPPRDAVKTCITCEVSYCDRCLRATHPNKKPFTSHRLVEP). Residues 190–232 (LRGITCLDHENEKVNMYCVSDDQLICALCKLVGRHRDHQVASL) form a B box-type 2 zinc finger. Positions 195, 198, 218, and 224 each coordinate Zn(2+). A coiled-coil region spans residues 233–301 (NDRFEKLKQT…IIQQRKQMIA (69 aa)). Residues 340 to 399 (LKENDQARFLQSAKNIAERVAMATASSQVLIPDINFNDAFENFALDFSREKKLLEGLDYL) form the COS domain. Positions 398 to 531 (YLTAPNPPSI…RNSEPTRLKT (134 aa)) constitute a Fibronectin type-III domain. Residues 516–709 (INQAGSRNSE…ILSGLPAPDF (194 aa)) enclose the B30.2/SPRY domain.

This sequence belongs to the TRIM/RBCC family. Homodimer or heterodimer with MID1. Interacts with IGBP1. Post-translationally, phosphorylated on serine and threonine residues. In terms of tissue distribution, low level in fetal kidney and lung, and in adult prostate, ovary and small intestine.

It localises to the cytoplasm. The protein resides in the cytoskeleton. It carries out the reaction S-ubiquitinyl-[E2 ubiquitin-conjugating enzyme]-L-cysteine + [acceptor protein]-L-lysine = [E2 ubiquitin-conjugating enzyme]-L-cysteine + N(6)-ubiquitinyl-[acceptor protein]-L-lysine.. The protein operates within protein modification; protein ubiquitination. In terms of biological role, E3 ubiquitin ligase that plays a role in microtubule stabilization. Mediates the 'Lys-48'-linked polyubiquitination of LRRK2 to drive its localization to microtubules and its proteasomal degradation in neurons. This ubiquitination inhibits LRRK2 kinase activation by RAB29. The protein is Probable E3 ubiquitin-protein ligase MID2 (MID2) of Homo sapiens (Human).